A 61-amino-acid polypeptide reads, in one-letter code: Small ribosomal subunit protein uS14 (61 aa).

Cys24, Cys27, Cys40, and Cys43 together coordinate Zn(2+).

Belongs to the universal ribosomal protein uS14 family. Zinc-binding uS14 subfamily. As to quaternary structure, part of the 30S ribosomal subunit. Contacts proteins S3 and S10. The cofactor is Zn(2+).

Binds 16S rRNA, required for the assembly of 30S particles and may also be responsible for determining the conformation of the 16S rRNA at the A site. The chain is Small ribosomal subunit protein uS14 from Spiroplasma citri.